An 860-amino-acid chain; its full sequence is Leucine--tRNA ligase (860 aa).

Positions 42-52 (PYPSGRLHMGH) match the 'HIGH' region motif. Residues 619-623 (KMSKS) carry the 'KMSKS' region motif. An ATP-binding site is contributed by Lys622.

The protein belongs to the class-I aminoacyl-tRNA synthetase family.

The protein resides in the cytoplasm. It catalyses the reaction tRNA(Leu) + L-leucine + ATP = L-leucyl-tRNA(Leu) + AMP + diphosphate. This chain is Leucine--tRNA ligase, found in Escherichia coli O81 (strain ED1a).